Consider the following 162-residue polypeptide: MKYGLFLSQLERLVARWALVESPIVIKLGTRCRITLRKRHVDWTSHRFVVFPVKIYGLCVRHMNVLVWDMGHQRVERFEPFRMGFPEVQPTIDGALTNLLNQLAAADGSQTLQYRTLVTAWGNKSDHVDTHCCRWCLEWLEKKFPPPVEVGKNQGEKKQINK.

This is an uncharacterized protein from Aedes vexans (Inland floodwater mosquito).